Reading from the N-terminus, the 599-residue chain is Aspartate--tRNA(Asp/Asn) ligase (599 aa).

Glu169 is a binding site for L-aspartate. Residues 193-196 (QLFK) are aspartate. Residue Arg215 coordinates L-aspartate. ATP is bound by residues 215–217 (RDE) and Gln224. His447 lines the L-aspartate pocket. Glu481 is an ATP binding site. Position 488 (Arg488) interacts with L-aspartate. 533–536 (GWDR) contacts ATP.

The protein belongs to the class-II aminoacyl-tRNA synthetase family. Type 1 subfamily. As to quaternary structure, homodimer.

The protein localises to the cytoplasm. It carries out the reaction tRNA(Asx) + L-aspartate + ATP = L-aspartyl-tRNA(Asx) + AMP + diphosphate. Its function is as follows. Aspartyl-tRNA synthetase with relaxed tRNA specificity since it is able to aspartylate not only its cognate tRNA(Asp) but also tRNA(Asn). Reaction proceeds in two steps: L-aspartate is first activated by ATP to form Asp-AMP and then transferred to the acceptor end of tRNA(Asp/Asn). The protein is Aspartate--tRNA(Asp/Asn) ligase of Pseudarthrobacter chlorophenolicus (strain ATCC 700700 / DSM 12829 / CIP 107037 / JCM 12360 / KCTC 9906 / NCIMB 13794 / A6) (Arthrobacter chlorophenolicus).